Here is a 654-residue protein sequence, read N- to C-terminus: RNA polymerase I-specific transcription initiation factor tif-1A (654 aa).

The tract at residues 1 to 37 (MKRSTANAPKLSPKHESESDPKKVKLEEEAKPTVNQA) is disordered. The segment covering 13 to 31 (PKHESESDPKKVKLEEEAK) has biased composition (basic and acidic residues).

This sequence belongs to the RRN3 family.

The protein resides in the nucleus. The protein localises to the nucleolus. Required for efficient transcription initiation by RNA polymerase I (Pol I). This chain is RNA polymerase I-specific transcription initiation factor tif-1A, found in Caenorhabditis elegans.